We begin with the raw amino-acid sequence, 512 residues long: Gustatory and odorant receptor 63a (512 aa).

The tract at residues Met-1–Met-24 is disordered. The Cytoplasmic segment spans residues Met-1 to Ser-129. Residues Ala-130–Ala-150 form a helical membrane-spanning segment. The Extracellular portion of the chain corresponds to Asn-151–Glu-166. A helical membrane pass occupies residues Ala-167–Trp-187. Over Tyr-188–Lys-222 the chain is Cytoplasmic. Residues Ala-223 to Val-243 traverse the membrane as a helical segment. The Extracellular portion of the chain corresponds to Thr-244–Met-265. Residue Asn-261 is glycosylated (N-linked (GlcNAc...) asparagine). Residues Leu-266–Ala-285 traverse the membrane as a helical segment. Over Glu-286 to Tyr-324 the chain is Cytoplasmic. The helical transmembrane segment at Thr-325 to Met-345 threads the bilayer. At Ser-346–Glu-350 the chain is on the extracellular side. A helical transmembrane segment spans residues Gly-351 to Phe-371. Topologically, residues Tyr-372–Lys-436 are cytoplasmic. A helical transmembrane segment spans residues Gly-437 to Pro-457. Topologically, residues Thr-458–Gly-512 are extracellular. An N-linked (GlcNAc...) asparagine glycan is attached at Asn-468.

It belongs to the insect chemoreceptor superfamily. Gustatory receptor (GR) family. Gr21a subfamily. In terms of assembly, gr21a and Gr63a probably form a heterodimer that responds to CO(2). As to expression, expressed in the medial aspect of the third antennal segment. Carbon dioxide-responsive neurons coexpress Gr21a and Gr63a in a pair of chemosensory receptors at both larval and adult life stages.

It is found in the cell membrane. In terms of biological role, gustatory and odorant receptor which mediates acceptance or avoidance behavior, depending on its substrates. Gr21a and Gr63a together are sufficient for carbon dioxide detection and avoidance behavior. It is possible that the CO(2) receptors Gr63a and Gr21a activate the TRPC channels through Galpha49B and Plc21C. This innate olfactory avoidance behavior can be inhibited by inhibitory interactions of the odors such as 1-hexanol and 2,3-butanedione with Gr21a and Gr63a. The sequence is that of Gustatory and odorant receptor 63a (Gr63a) from Drosophila melanogaster (Fruit fly).